Reading from the N-terminus, the 260-residue chain is Hydroxyacylglutathione hydrolase (260 aa).

Zn(2+) is bound by residues histidine 61, histidine 63, aspartate 65, histidine 66, histidine 119, aspartate 138, and histidine 176.

This sequence belongs to the metallo-beta-lactamase superfamily. Glyoxalase II family. As to quaternary structure, monomer. The cofactor is Zn(2+).

The catalysed reaction is an S-(2-hydroxyacyl)glutathione + H2O = a 2-hydroxy carboxylate + glutathione + H(+). Its pathway is secondary metabolite metabolism; methylglyoxal degradation; (R)-lactate from methylglyoxal: step 2/2. In terms of biological role, thiolesterase that catalyzes the hydrolysis of S-D-lactoyl-glutathione to form glutathione and D-lactic acid. This is Hydroxyacylglutathione hydrolase from Brucella anthropi (strain ATCC 49188 / DSM 6882 / CCUG 24695 / JCM 21032 / LMG 3331 / NBRC 15819 / NCTC 12168 / Alc 37) (Ochrobactrum anthropi).